Here is a 383-residue protein sequence, read N- to C-terminus: Putative glutamate--cysteine ligase 2-1 (383 aa).

It belongs to the glutamate--cysteine ligase type 2 family. YbdK subfamily.

It catalyses the reaction L-cysteine + L-glutamate + ATP = gamma-L-glutamyl-L-cysteine + ADP + phosphate + H(+). Its function is as follows. ATP-dependent carboxylate-amine ligase which exhibits weak glutamate--cysteine ligase activity. The chain is Putative glutamate--cysteine ligase 2-1 from Nocardia farcinica (strain IFM 10152).